Consider the following 147-residue polypeptide: Hemoglobin subunit rho (147 aa).

Positions 3–147 (HWSAEEKQLI…VAHALAYKYH (145 aa)) constitute a Globin domain. Residues His64 and His93 each coordinate heme b.

This sequence belongs to the globin family.

Its function is as follows. The rho chain is the major early embryonic beta-type hemoglobin chain. The sequence is that of Hemoglobin subunit rho from Gallus gallus (Chicken).